Reading from the N-terminus, the 336-residue chain is Ornithine carbamoyltransferase, catabolic (336 aa).

Carbamoyl phosphate-binding positions include 62-65 (STRT), glutamine 89, arginine 113, and 140-143 (HPTQ). L-ornithine contacts are provided by residues asparagine 172, aspartate 236, and 240-241 (SM). Carbamoyl phosphate contacts are provided by residues 277–278 (CL) and arginine 322.

Belongs to the aspartate/ornithine carbamoyltransferase superfamily. OTCase family.

The protein resides in the cytoplasm. It carries out the reaction carbamoyl phosphate + L-ornithine = L-citrulline + phosphate + H(+). It functions in the pathway amino-acid degradation; L-arginine degradation via ADI pathway; carbamoyl phosphate from L-arginine: step 2/2. Its function is as follows. Reversibly catalyzes the transfer of the carbamoyl group from carbamoyl phosphate (CP) to the N(epsilon) atom of ornithine (ORN) to produce L-citrulline. The polypeptide is Ornithine carbamoyltransferase, catabolic (Staphylococcus aureus (strain MRSA252)).